The chain runs to 148 residues: Nucleoside diphosphate kinase (148 aa).

ATP is bound by residues Lys9, Phe57, Arg85, Thr91, Arg102, and Asn112. Residue His115 is the Pros-phosphohistidine intermediate of the active site.

Belongs to the NDK family. In terms of assembly, homotetramer. Mg(2+) is required as a cofactor.

It is found in the cytoplasm. It catalyses the reaction a 2'-deoxyribonucleoside 5'-diphosphate + ATP = a 2'-deoxyribonucleoside 5'-triphosphate + ADP. It carries out the reaction a ribonucleoside 5'-diphosphate + ATP = a ribonucleoside 5'-triphosphate + ADP. In terms of biological role, major role in the synthesis of nucleoside triphosphates other than ATP. The ATP gamma phosphate is transferred to the NDP beta phosphate via a ping-pong mechanism, using a phosphorylated active-site intermediate. In Macrococcus caseolyticus (strain JCSC5402) (Macrococcoides caseolyticum), this protein is Nucleoside diphosphate kinase.